A 553-amino-acid polypeptide reads, in one-letter code: Aminotransferase FUM8 (553 aa).

An N-terminal signal peptide occupies residues 1-25 (MSPAPAILALRRVYNFCLLVDEAHG). N480 carries N-linked (GlcNAc...) asparagine glycosylation.

It belongs to the class-II pyridoxal-phosphate-dependent aminotransferase family. BioF subfamily. It depends on pyridoxal 5'-phosphate as a cofactor.

The protein resides in the endoplasmic reticulum. The protein operates within mycotoxin biosynthesis. Functionally, aminotransferase; part of the gene cluster that mediates the biosynthesis of fumonisins B1 (FB1), B2 (FB2), B3 (FB3), and B4 (FB4), which are carcinogenic mycotoxins. Within the pathway, FUM8 catalyzes the release of the C-18 polyketide chain from the highly reducing polyketide synthase FUM1 by a nucleophilic attack of a carbanion, which is derived from R-carbon of alanine by decarboxylation, on the carbonyl carbon of polyketide acyl chain. The biosynthesis starts with the FUM1-catalyzed carbon chain assembly from one molecule of acetyl-CoA, eight molecules of malonyl-CoA, and two molecules of methionine (in S-adenosyl form). The C18 polyketide chain is released from the enzyme by a nucleophilic attack of a carbanion, which is derived from R-carbon of alanine by decarboxylation, on the carbonyl carbon of polyketide acyl chain. This step is catalyzed by the pyridoxal 5'-phosphate-dependent aminoacyl transferase FUM8. The resultant 3-keto intermediate is then stereospecifically reduced to a 3-hydroxyl product by reductase FUM13. Subsequent oxidations at C-10 by the cytochrome P450 monooxygenase FUM2, C-14 and C-15 by FUM6, FUM12 or FUM15, tricarballylic esterification of the hydroxyl groups on C-14 and C-15 by acyltransferase FUM14, and C-5 hydroxylation by 2-keto-glutarate-dependent dioxygenase FUM3 furnish the biosynthesis of fumonisins. The tricarballylic moieties are most likely derived from the citric acid cycle, and their addition to the carbon backbone may involve FUM7, FUM10, FUM11 and FUM14. The protein is Aminotransferase FUM8 of Gibberella moniliformis (strain M3125 / FGSC 7600) (Maize ear and stalk rot fungus).